The primary structure comprises 470 residues: Mitogen-activated protein kinase 15 (470 aa).

One can recognise a Protein kinase domain in the interval 13–306 (FDLQKRLGKG…VEQCLVHPYV (294 aa)). Residues 19-27 (LGKGAYGIV) and Lys42 each bind ATP. Asp137 acts as the Proton acceptor in catalysis. Thr178 carries the post-translational modification Phosphothreonine. The short motif at 178 to 180 (TEY) is the TXY element. Tyr180 carries the phosphotyrosine modification. The disordered stretch occupies residues 362 to 445 (PYGEDKSRAP…PSSIKQRRRS (84 aa)). Positions 394–406 (MDKNNSSSHDSSS) are enriched in low complexity. Positions 409–426 (LRERAASAESRTSKDSNG) are enriched in basic and acidic residues.

Belongs to the protein kinase superfamily. CMGC Ser/Thr protein kinase family. MAP kinase subfamily. It depends on Mg(2+) as a cofactor. In terms of processing, dually phosphorylated on Thr-178 and Tyr-180, which activates the enzyme. Expressed in the URX neuron and in many other head sensory neurons. Isoform a: Expressed in head and tail ciliated sensory neurons, and in mid-body neurons. Isoform c: Expressed in head and tail ciliated sensory neurons, and in mid-body neurons.

It localises to the cell projection. Its subcellular location is the cilium. It is found in the cilium membrane. The protein resides in the cytoplasm. The protein localises to the cytoskeleton. It localises to the cilium axoneme. Its subcellular location is the cilium basal body. It is found in the cell junction. The protein resides in the perikaryon. The protein localises to the dendrite. It carries out the reaction L-seryl-[protein] + ATP = O-phospho-L-seryl-[protein] + ADP + H(+). It catalyses the reaction L-threonyl-[protein] + ATP = O-phospho-L-threonyl-[protein] + ADP + H(+). Its activity is regulated as follows. Activated by threonine and tyrosine phosphorylation. Its function is as follows. Atypical MAPK protein. Regulates primary cilium formation in sensory neurons and the localization of ciliary proteins involved in cilium structure, transport, and signaling. Acts in dopamine (DA) neurons to support synaptic membrane dat-1 availability via activation of rho-1 thereby sustaining normal levels of DA clearance. Plays a role in male mating behavior, probably in part through regulating the localization of the polycystin pkd-2. Functions postembryonically in the URX sensory neurons to constrain URX dendrite growth throughout lifetime, probably by restricting expansion of the subcellular sensory compartment at the dendrite ending. The polypeptide is Mitogen-activated protein kinase 15 (Caenorhabditis elegans).